The chain runs to 501 residues: MGERTPMLKMVGVSKSFPGVKALDNVSLMAYGGEVTALMGENGAGKSTLMKILSGVYKKDEGKIFIEGREVEVKGIKSAEEAGITIIHQELSVLNNLTISENIFLGNEKHSKFTGRINKKLLDERSKMFLEQIGCDIDPNRLVSTLNVGEKQMIEIAKALTKNARIIIMDEPTTALTDVETENLFKVIENLRKKGIAIIYISHRMEEIFKICHRVEVLRDGKYAGSAEIKDIDNDKLIAMMVGRTIEDQFPYRDVKKGDLALEVKNLSCKEGVKGASFTLRKGEILGIAGLMGSGRTELAKTIFGEYKRTSGEISLNGSPININCISDAINNGICYLSEDRKKEGCILGMSVGENMTLCNLKKYENKFKSLDKKEEAKDIEYYIKKINIKTPNKEQFIKNLSGGNQQKVILAKWLMLSPEVLIIDEPTRGIDVGAKKEIYELLNELKASGKAIIMISSDLPEVLGISDRIMVMSEGRISGELNRDEANQESIMKLAVGINN.

ABC transporter domains lie at 8 to 245 (LKMV…VGRT) and 255 to 500 (VKKG…VGIN). 40–47 (GENGAGKS) contacts ATP.

The protein belongs to the ABC transporter superfamily. Ribose importer (TC 3.A.1.2.1) family. As to quaternary structure, the complex is composed of an ATP-binding protein (RbsA), two transmembrane proteins (RbsC) and a solute-binding protein (RbsB).

The protein localises to the cell membrane. It catalyses the reaction D-ribose(out) + ATP + H2O = D-ribose(in) + ADP + phosphate + H(+). Its function is as follows. Part of the ABC transporter complex RbsABC involved in ribose import. Responsible for energy coupling to the transport system. This is Ribose import ATP-binding protein RbsA from Clostridium perfringens (strain 13 / Type A).